The primary structure comprises 599 residues: Dictomallein-2 (599 aa).

Positions 1–20 are cleaved as a signal peptide; sequence MKLILIYLILVFNLFNFINC. Residues 145-407 form the Peptidase M66 domain; that stretch reads PDVGQDYTLK…QNYFKNSIYY (263 aa). His-298 is a binding site for Zn(2+). Glu-299 is a catalytic residue. Residues His-302 and His-308 each contribute to the Zn(2+) site.

This sequence belongs to the dictomallein family. Zn(2+) is required as a cofactor.

It is found in the secreted. This Dictyostelium discoideum (Social amoeba) protein is Dictomallein-2 (dtmlB).